The following is a 331-amino-acid chain: Mitochondrial carrier protein CoAc1 (331 aa).

The next 6 membrane-spanning stretches (helical) occupy residues 16–36, 79–99, 123–143, 193–213, 231–251, and 292–312; these read LVDTLPVLAKTLIAGGAAGAI, FYKGNGASVIRIIPYAALHYM, LVAGSAAGGTAVLCTYPLDLA, GIGPTLIGILPYAGLKFYIYE, LPCGALAGLFGQTITYPLDVV, and FAGLSINYIKIVPSVAIGFTV. Solcar repeat units follow at residues 21–107, 117–218, and 225–319; these read PVLA…YRDW, SGPI…LKRH, and NSVR…MKSW.

The protein belongs to the mitochondrial carrier (TC 2.A.29) family. As to expression, expressed throughout the plant.

Its subcellular location is the mitochondrion inner membrane. In terms of biological role, required for the accumulation of coenzyme A in the mitochondrial matrix. The polypeptide is Mitochondrial carrier protein CoAc1 (Arabidopsis thaliana (Mouse-ear cress)).